We begin with the raw amino-acid sequence, 262 residues long: Ribose-5-phosphate isomerase A (262 aa).

Residues 33–36, 89–92, and 102–105 contribute to the substrate site; these read TGST, DGAD, and KGGG. Residue glutamate 111 is the Proton acceptor of the active site. Residue lysine 129 participates in substrate binding.

It belongs to the ribose 5-phosphate isomerase family. In terms of assembly, homodimer.

It catalyses the reaction aldehydo-D-ribose 5-phosphate = D-ribulose 5-phosphate. Its pathway is carbohydrate degradation; pentose phosphate pathway; D-ribose 5-phosphate from D-ribulose 5-phosphate (non-oxidative stage): step 1/1. Catalyzes the reversible conversion of ribose-5-phosphate to ribulose 5-phosphate. The protein is Ribose-5-phosphate isomerase A of Roseobacter denitrificans (strain ATCC 33942 / OCh 114) (Erythrobacter sp. (strain OCh 114)).